A 510-amino-acid polypeptide reads, in one-letter code: Histidine ammonia-lyase (510 aa).

The 5-imidazolinone (Ala-Gly) cross-link spans 143–145; sequence ASG. A 2,3-didehydroalanine (Ser) modification is found at Ser144.

The protein belongs to the PAL/histidase family. In terms of processing, contains an active site 4-methylidene-imidazol-5-one (MIO), which is formed autocatalytically by cyclization and dehydration of residues Ala-Ser-Gly.

Its subcellular location is the cytoplasm. The catalysed reaction is L-histidine = trans-urocanate + NH4(+). It participates in amino-acid degradation; L-histidine degradation into L-glutamate; N-formimidoyl-L-glutamate from L-histidine: step 1/3. The chain is Histidine ammonia-lyase from Pseudomonas putida (strain ATCC 47054 / DSM 6125 / CFBP 8728 / NCIMB 11950 / KT2440).